Reading from the N-terminus, the 238-residue chain is Pyridoxine 5'-phosphate synthase (238 aa).

Residue asparagine 7 participates in 3-amino-2-oxopropyl phosphate binding. Aspartate 9–histidine 10 is a 1-deoxy-D-xylulose 5-phosphate binding site. Position 18 (arginine 18) interacts with 3-amino-2-oxopropyl phosphate. Histidine 43 serves as the catalytic Proton acceptor. The 1-deoxy-D-xylulose 5-phosphate site is built by arginine 45 and histidine 50. The active-site Proton acceptor is the glutamate 70. Threonine 100 is a binding site for 1-deoxy-D-xylulose 5-phosphate. Histidine 190 serves as the catalytic Proton donor. Residues glycine 191 and glycine 212 to histidine 213 contribute to the 3-amino-2-oxopropyl phosphate site.

It belongs to the PNP synthase family. In terms of assembly, homooctamer; tetramer of dimers.

The protein resides in the cytoplasm. The enzyme catalyses 3-amino-2-oxopropyl phosphate + 1-deoxy-D-xylulose 5-phosphate = pyridoxine 5'-phosphate + phosphate + 2 H2O + H(+). It functions in the pathway cofactor biosynthesis; pyridoxine 5'-phosphate biosynthesis; pyridoxine 5'-phosphate from D-erythrose 4-phosphate: step 5/5. Functionally, catalyzes the complicated ring closure reaction between the two acyclic compounds 1-deoxy-D-xylulose-5-phosphate (DXP) and 3-amino-2-oxopropyl phosphate (1-amino-acetone-3-phosphate or AAP) to form pyridoxine 5'-phosphate (PNP) and inorganic phosphate. This chain is Pyridoxine 5'-phosphate synthase, found in Prochlorococcus marinus (strain MIT 9215).